Here is a 376-residue protein sequence, read N- to C-terminus: Cobalt-precorrin-5B C(1)-methyltransferase (376 aa).

The segment at 353–376 (KGRTTSTPSHQPAPSSFGDRNRRT) is disordered. Residues 355–366 (RTTSTPSHQPAP) are compositionally biased toward polar residues.

Belongs to the CbiD family.

The catalysed reaction is Co-precorrin-5B + S-adenosyl-L-methionine = Co-precorrin-6A + S-adenosyl-L-homocysteine. It functions in the pathway cofactor biosynthesis; adenosylcobalamin biosynthesis; cob(II)yrinate a,c-diamide from sirohydrochlorin (anaerobic route): step 6/10. Catalyzes the methylation of C-1 in cobalt-precorrin-5B to form cobalt-precorrin-6A. The sequence is that of Cobalt-precorrin-5B C(1)-methyltransferase from Agrobacterium fabrum (strain C58 / ATCC 33970) (Agrobacterium tumefaciens (strain C58)).